The sequence spans 338 residues: Uroporphyrinogen decarboxylase (338 aa).

Substrate contacts are provided by residues 25–29, Phe-44, Asp-75, Tyr-146, Ser-201, and His-314; that span reads RQAGR.

Belongs to the uroporphyrinogen decarboxylase family. As to quaternary structure, homodimer.

The protein localises to the cytoplasm. The catalysed reaction is uroporphyrinogen III + 4 H(+) = coproporphyrinogen III + 4 CO2. Its pathway is porphyrin-containing compound metabolism; protoporphyrin-IX biosynthesis; coproporphyrinogen-III from 5-aminolevulinate: step 4/4. In terms of biological role, catalyzes the decarboxylation of four acetate groups of uroporphyrinogen-III to yield coproporphyrinogen-III. The chain is Uroporphyrinogen decarboxylase from Aquifex aeolicus (strain VF5).